The primary structure comprises 146 residues: Hemoglobin subunit beta (146 aa).

At Val1 the chain carries N-acetylvaline. Residues 2–146 enclose the Globin domain; sequence HLTDAEKAAV…VATALAHKYH (145 aa). At Ser44 the chain carries Phosphoserine. Lys59 carries the N6-acetyllysine modification. His63 contacts heme b. Lys82 is modified (N6-acetyllysine). His92 is a binding site for heme b. The residue at position 93 (Cys93) is an S-nitrosocysteine. Lys144 is modified (N6-acetyllysine).

It belongs to the globin family. Heterotetramer of two alpha chains and two beta chains. In terms of tissue distribution, red blood cells.

In terms of biological role, involved in oxygen transport from the lung to the various peripheral tissues. The polypeptide is Hemoglobin subunit beta (HBB) (Spalax ehrenbergi (Middle East blind mole rat)).